Reading from the N-terminus, the 611-residue chain is Probable Xaa-Pro aminopeptidase P (611 aa).

The Mn(2+) site is built by aspartate 408, aspartate 419, glutamate 517, and glutamate 531.

This sequence belongs to the peptidase M24B family. Requires Mn(2+) as cofactor.

The catalysed reaction is Release of any N-terminal amino acid, including proline, that is linked to proline, even from a dipeptide or tripeptide.. Catalyzes the removal of a penultimate prolyl residue from the N-termini of peptides. The protein is Probable Xaa-Pro aminopeptidase P (AMPP) of Coccidioides posadasii (strain RMSCC 757 / Silveira) (Valley fever fungus).